A 338-amino-acid polypeptide reads, in one-letter code: Glycerol-3-phosphate dehydrogenase [NAD(P)+] (338 aa).

Residues tryptophan 20 and lysine 110 each coordinate NADPH. Lysine 110, glycine 141, and serine 143 together coordinate sn-glycerol 3-phosphate. Alanine 145 is an NADPH binding site. Sn-glycerol 3-phosphate-binding residues include lysine 197, aspartate 250, serine 260, arginine 261, and asparagine 262. The Proton acceptor role is filled by lysine 197. Arginine 261 is an NADPH binding site. Glutamate 287 contributes to the NADPH binding site.

Belongs to the NAD-dependent glycerol-3-phosphate dehydrogenase family.

It is found in the cytoplasm. The catalysed reaction is sn-glycerol 3-phosphate + NAD(+) = dihydroxyacetone phosphate + NADH + H(+). It catalyses the reaction sn-glycerol 3-phosphate + NADP(+) = dihydroxyacetone phosphate + NADPH + H(+). Its pathway is membrane lipid metabolism; glycerophospholipid metabolism. Functionally, catalyzes the reduction of the glycolytic intermediate dihydroxyacetone phosphate (DHAP) to sn-glycerol 3-phosphate (G3P), the key precursor for phospholipid synthesis. The protein is Glycerol-3-phosphate dehydrogenase [NAD(P)+] of Aster yellows witches'-broom phytoplasma (strain AYWB).